A 202-amino-acid chain; its full sequence is Xanthine phosphoribosyltransferase (202 aa).

Xanthine is bound by residues L20 and N27. A 5-phospho-alpha-D-ribose 1-diphosphate-binding site is contributed by 128–132 (ASGGT). K156 contributes to the xanthine binding site.

The protein belongs to the purine/pyrimidine phosphoribosyltransferase family. Xpt subfamily. In terms of assembly, homodimer.

It localises to the cytoplasm. The catalysed reaction is XMP + diphosphate = xanthine + 5-phospho-alpha-D-ribose 1-diphosphate. It functions in the pathway purine metabolism; XMP biosynthesis via salvage pathway; XMP from xanthine: step 1/1. Converts the preformed base xanthine, a product of nucleic acid breakdown, to xanthosine 5'-monophosphate (XMP), so it can be reused for RNA or DNA synthesis. In Deinococcus geothermalis (strain DSM 11300 / CIP 105573 / AG-3a), this protein is Xanthine phosphoribosyltransferase.